A 286-amino-acid polypeptide reads, in one-letter code: Lipoyl synthase (286 aa).

The [4Fe-4S] cluster site is built by Cys29, Cys34, Cys40, Cys55, Cys59, Cys62, and Ser265. The 214-residue stretch at Trp41–Ser254 folds into the Radical SAM core domain.

The protein belongs to the radical SAM superfamily. Lipoyl synthase family. It depends on [4Fe-4S] cluster as a cofactor.

The protein resides in the cytoplasm. It carries out the reaction [[Fe-S] cluster scaffold protein carrying a second [4Fe-4S](2+) cluster] + N(6)-octanoyl-L-lysyl-[protein] + 2 oxidized [2Fe-2S]-[ferredoxin] + 2 S-adenosyl-L-methionine + 4 H(+) = [[Fe-S] cluster scaffold protein] + N(6)-[(R)-dihydrolipoyl]-L-lysyl-[protein] + 4 Fe(3+) + 2 hydrogen sulfide + 2 5'-deoxyadenosine + 2 L-methionine + 2 reduced [2Fe-2S]-[ferredoxin]. Its pathway is protein modification; protein lipoylation via endogenous pathway; protein N(6)-(lipoyl)lysine from octanoyl-[acyl-carrier-protein]: step 2/2. In terms of biological role, catalyzes the radical-mediated insertion of two sulfur atoms into the C-6 and C-8 positions of the octanoyl moiety bound to the lipoyl domains of lipoate-dependent enzymes, thereby converting the octanoylated domains into lipoylated derivatives. This Sulfolobus acidocaldarius (strain ATCC 33909 / DSM 639 / JCM 8929 / NBRC 15157 / NCIMB 11770) protein is Lipoyl synthase.